We begin with the raw amino-acid sequence, 301 residues long: 33 kDa chaperonin (301 aa).

2 disulfides stabilise this stretch: Cys-239–Cys-241 and Cys-272–Cys-275.

Belongs to the HSP33 family. Under oxidizing conditions two disulfide bonds are formed involving the reactive cysteines. Under reducing conditions zinc is bound to the reactive cysteines and the protein is inactive.

The protein localises to the cytoplasm. Functionally, redox regulated molecular chaperone. Protects both thermally unfolding and oxidatively damaged proteins from irreversible aggregation. Plays an important role in the bacterial defense system toward oxidative stress. The sequence is that of 33 kDa chaperonin from Nostoc sp. (strain PCC 7120 / SAG 25.82 / UTEX 2576).